The following is a 363-amino-acid chain: Isopentenyl-diphosphate delta-isomerase (363 aa).

A substrate-binding site is contributed by 7–8; that stretch reads RK. FMN is bound by residues 71-73, Ser-101, and Asn-130; that span reads AMT. Gln-160 is a binding site for substrate. Position 161 (Glu-161) interacts with Mg(2+). FMN-binding positions include Lys-192, Ser-217, Thr-222, 270-272, and 291-292; these read GIR and AG.

Belongs to the IPP isomerase type 2 family. Homooctamer. Dimer of tetramers. Requires FMN as cofactor. NADPH is required as a cofactor. The cofactor is Mg(2+).

It is found in the cytoplasm. The enzyme catalyses isopentenyl diphosphate = dimethylallyl diphosphate. In terms of biological role, involved in the biosynthesis of isoprenoids. Catalyzes the 1,3-allylic rearrangement of the homoallylic substrate isopentenyl (IPP) to its allylic isomer, dimethylallyl diphosphate (DMAPP). The chain is Isopentenyl-diphosphate delta-isomerase from Symbiobacterium thermophilum (strain DSM 24528 / JCM 14929 / IAM 14863 / T).